A 430-amino-acid chain; its full sequence is Delta-aminolevulinic acid dehydratase 1, chloroplastic (430 aa).

Residues 1–52 (MATTPIFNASCSFPSTRGIDCKSYIGLRSNVSKVSVASSRIATSQRRNLVVR) constitute a chloroplast transit peptide. The span at 82–91 (EAPPVPPKPA) shows a compositional bias: pro residues. Positions 82-101 (EAPPVPPKPAAPVGTPIIKP) are disordered. The Schiff-base intermediate with substrate role is filled by Lys298. 5-aminolevulinate-binding residues include Arg308 and Lys320. Residue Glu336 participates in Mg(2+) binding. Residue Lys351 is the Schiff-base intermediate with substrate of the active site. Positions 377 and 416 each coordinate 5-aminolevulinate.

It belongs to the ALAD family. In terms of assembly, homooctamer. It depends on Mg(2+) as a cofactor. As to expression, highly expressed in cotyledons during dark-to-light transition.

It is found in the plastid. The protein localises to the chloroplast. The catalysed reaction is 2 5-aminolevulinate = porphobilinogen + 2 H2O + H(+). It functions in the pathway porphyrin-containing compound metabolism; protoporphyrin-IX biosynthesis; coproporphyrinogen-III from 5-aminolevulinate: step 1/4. The protein operates within porphyrin-containing compound metabolism; chlorophyll biosynthesis. Its function is as follows. Catalyzes an early step in the biosynthesis of tetrapyrroles. Binds two molecules of 5-aminolevulinate per subunit, each at a distinct site, and catalyzes their condensation to form porphobilinogen. The sequence is that of Delta-aminolevulinic acid dehydratase 1, chloroplastic (HEMB1) from Arabidopsis thaliana (Mouse-ear cress).